We begin with the raw amino-acid sequence, 88 residues long: Gene 86 protein (88 aa).

The segment at 64-88 is disordered; the sequence is WRGNPSAYDDEVGDLEGFETQHSDY. Over residues 71–80 the composition is skewed to acidic residues; the sequence is YDDEVGDLEG.

This Mycobacterium (Mycobacteriophage L5) protein is Gene 86 protein (86).